The primary structure comprises 459 residues: GTPase Der (459 aa).

EngA-type G domains follow at residues proline 3–glutamate 169 and isoleucine 183–arginine 358. GTP contacts are provided by residues glycine 9–serine 16, aspartate 56–phenylalanine 60, asparagine 119–aspartate 122, glycine 189–serine 196, aspartate 236–isoleucine 240, and asparagine 301–aspartate 304. The 84-residue stretch at phenylalanine 359–proline 442 folds into the KH-like domain.

This sequence belongs to the TRAFAC class TrmE-Era-EngA-EngB-Septin-like GTPase superfamily. EngA (Der) GTPase family. In terms of assembly, associates with the 50S ribosomal subunit.

Its function is as follows. GTPase that plays an essential role in the late steps of ribosome biogenesis. The chain is GTPase Der from Myxococcus xanthus (strain DK1622).